The sequence spans 346 residues: Phenylalanine--tRNA ligase alpha subunit (346 aa).

E264 contributes to the Mg(2+) binding site.

It belongs to the class-II aminoacyl-tRNA synthetase family. Phe-tRNA synthetase alpha subunit type 1 subfamily. Tetramer of two alpha and two beta subunits. Mg(2+) serves as cofactor.

Its subcellular location is the cytoplasm. It carries out the reaction tRNA(Phe) + L-phenylalanine + ATP = L-phenylalanyl-tRNA(Phe) + AMP + diphosphate + H(+). The sequence is that of Phenylalanine--tRNA ligase alpha subunit from Leifsonia xyli subsp. xyli (strain CTCB07).